The chain runs to 449 residues: Doublesex- and mab-3-related transcription factor A2 (449 aa).

Residues 57-104 (CARCRNHGVVSALKGHKRYCRWKDCMCAKCTLIAERQRVMAAQVALRR) constitute a DNA-binding region (DM). Residues 163–259 (FPKTQLSGST…PSPSSAASRH (97 aa)) form a disordered region. Residues 166–187 (TQLSGSTTTQKSVGKPASTESD) show a composition bias toward polar residues. Residues 230 to 240 (GSVSSLGSDSG) show a composition bias toward low complexity. The DMA domain occupies 260–295 (MNAIDILTRVFPSHKRSVLELVLQGCGKDVVQAIEQ).

The protein belongs to the DMRT family. In terms of tissue distribution, expressed in brain and eye.

The protein resides in the nucleus. Functionally, may be involved in sexual development. The chain is Doublesex- and mab-3-related transcription factor A2 (dmrta2) from Xiphophorus maculatus (Southern platyfish).